Reading from the N-terminus, the 322-residue chain is 4-hydroxythreonine-4-phosphate dehydrogenase (322 aa).

Substrate is bound by residues histidine 131 and threonine 132. Residues histidine 161, histidine 206, and histidine 259 each coordinate a divalent metal cation. Residues lysine 267, asparagine 276, and arginine 285 each contribute to the substrate site.

The protein belongs to the PdxA family. Homodimer. The cofactor is a divalent metal cation.

Its subcellular location is the cytoplasm. The enzyme catalyses 4-(phosphooxy)-L-threonine + NAD(+) = 3-amino-2-oxopropyl phosphate + CO2 + NADH. The protein operates within cofactor biosynthesis; pyridoxine 5'-phosphate biosynthesis; pyridoxine 5'-phosphate from D-erythrose 4-phosphate: step 4/5. In terms of biological role, catalyzes the NAD(P)-dependent oxidation of 4-(phosphooxy)-L-threonine (HTP) into 2-amino-3-oxo-4-(phosphooxy)butyric acid which spontaneously decarboxylates to form 3-amino-2-oxopropyl phosphate (AHAP). This Sulfurihydrogenibium sp. (strain YO3AOP1) protein is 4-hydroxythreonine-4-phosphate dehydrogenase.